Consider the following 208-residue polypeptide: N-(5'-phosphoribosyl)anthranilate isomerase (208 aa).

This sequence belongs to the TrpF family.

It catalyses the reaction N-(5-phospho-beta-D-ribosyl)anthranilate = 1-(2-carboxyphenylamino)-1-deoxy-D-ribulose 5-phosphate. It participates in amino-acid biosynthesis; L-tryptophan biosynthesis; L-tryptophan from chorismate: step 3/5. The sequence is that of N-(5'-phosphoribosyl)anthranilate isomerase from Staphylococcus haemolyticus (strain JCSC1435).